Reading from the N-terminus, the 540-residue chain is Putative rhamnogalacturonase (540 aa).

The first 23 residues, methionine 1–alanine 23, serve as a signal peptide directing secretion. Disulfide bonds link cysteine 53-cysteine 100 and cysteine 192-cysteine 203. N-linked (GlcNAc...) asparagine glycosylation occurs at asparagine 89. The N-linked (GlcNAc...) asparagine glycan is linked to asparagine 368.

This sequence belongs to the polysaccharide lyase 4 family.

It localises to the secreted. It catalyses the reaction Endotype eliminative cleavage of L-alpha-rhamnopyranosyl-(1-&gt;4)-alpha-D-galactopyranosyluronic acid bonds of rhamnogalacturonan I domains in ramified hairy regions of pectin leaving L-rhamnopyranose at the reducing end and 4-deoxy-4,5-unsaturated D-galactopyranosyluronic acid at the non-reducing end.. Functionally, could be a pectinolytic enzyme that hydrolyzes the alpha-L-rhamnopyranosyl-(1,4)-alpha-D-galacturonopyranosyl glycosidic linkage by beta-elimination, thereby generating oligosaccharides terminating at the non-reducing end with a hex-4-enopyranosyluronic acid residue. The polypeptide is Putative rhamnogalacturonase (asd-1) (Neurospora crassa (strain ATCC 24698 / 74-OR23-1A / CBS 708.71 / DSM 1257 / FGSC 987)).